The chain runs to 310 residues: Putative HTH-type transcriptional regulatory protein LS215_1371 (310 aa).

The 56-residue stretch at 125-180 (LKHKREEMGYSIGDVAKFLGVSRKAIYDYEKGDSDVSLEVAEKLIDLFGDDIIGDV) folds into the HTH cro/C1-type domain. The segment at residues 136-155 (IGDVAKFLGVSRKAIYDYEK) is a DNA-binding region (H-T-H motif).

The chain is Putative HTH-type transcriptional regulatory protein LS215_1371 from Saccharolobus islandicus (strain L.S.2.15 / Lassen #1) (Sulfolobus islandicus).